The following is a 625-amino-acid chain: ATP-binding cassette sub-family F member 2 (625 aa).

Residues 1–54 (MPSDLAKKKAAKKKEAAKARQRPRKGHEENGDAITEPQVAEERNEEANGRETTE) form a disordered region. A compositionally biased stretch (basic and acidic residues) spans 40–54 (AEERNEEANGRETTE). 2 consecutive ABC transporter domains span residues 88–327 (AHII…ENQM) and 398–615 (IMVQ…VGEE). Residue 120–127 (GLNGIGKS) participates in ATP binding. T220 is modified (phosphothreonine). The residue at position 306 (K306) is an N6-acetyllysine. 432 to 439 (GPNGAGKS) is an ATP binding site. At S514 the chain carries Phosphoserine.

The protein belongs to the ABC transporter superfamily. ABCF family. EF3 subfamily.

The polypeptide is ATP-binding cassette sub-family F member 2 (ABCF2) (Bos taurus (Bovine)).